The following is a 147-amino-acid chain: Cyanate hydratase (147 aa).

Residues R88, E91, and S114 contribute to the active site.

This sequence belongs to the cyanase family.

It catalyses the reaction cyanate + hydrogencarbonate + 3 H(+) = NH4(+) + 2 CO2. Catalyzes the reaction of cyanate with bicarbonate to produce ammonia and carbon dioxide. The sequence is that of Cyanate hydratase from Methylibium petroleiphilum (strain ATCC BAA-1232 / LMG 22953 / PM1).